Reading from the N-terminus, the 276-residue chain is C-type lectin domain family 12 member B (276 aa).

Residues 1–43 (MSEDMTYATLTFQDSVAAGNNQDRNNLRKRGYPAPSSIWRQAA) lie on the Cytoplasmic side of the membrane. The ITIM motif signature appears at 5–10 (MTYATL). Tyr7 is modified (phosphotyrosine). The helical; Signal-anchor for type II membrane protein transmembrane segment at 44–64 (LGLLTLCVMLLIGLVTLGIMF) threads the bilayer. Residues 65–276 (LQMSSEINSD…AALVKIEDLD (212 aa)) lie on the Extracellular side of the membrane. Residues Asn91, Asn176, and Asn237 are each glycosylated (N-linked (GlcNAc...) asparagine). Positions 150-264 (YQTSCYYFAV…CSAEISWICE (115 aa)) constitute a C-type lectin domain. 2 cysteine pairs are disulfide-bonded: Cys172-Cys263 and Cys242-Cys255.

In terms of assembly, homodimer. Interacts (via ITIM motif) with PTPN6. Interacts (via ITIM motif) with PTPN11; this interaction triggers dephosphorylation and activation of PTPN11.

It is found in the cell membrane. Functionally, inhibitory receptor postulated to negatively regulate immune and non-immune functions. Upon phosphorylation, recruits SH2 domain-containing PTPN6 and PTPN11 phosphatases to its ITIM motif and antagonizes activation signals. Although it inhibits KLRK1/NKG2D-mediated signaling, it does not bind known ligands of KLRK1/NKG2D and therefore is not its inhibitory counterpart. May limit activation of myeloid cell subsets in response to infection or tissue inflammation. May protect target cells against natural killer cell-mediated lysis. May negatively regulate cell cycle and differentiation of melanocytes via inactivation of STAT3. This is C-type lectin domain family 12 member B (CLEC12B) from Bos taurus (Bovine).